The primary structure comprises 177 residues: Probable prophage lysozyme (177 aa).

Glu35 (proton donor) is an active-site residue. The active-site Nucleophile is Asp44.

It belongs to the glycosyl hydrolase 24 family.

The enzyme catalyses Hydrolysis of (1-&gt;4)-beta-linkages between N-acetylmuramic acid and N-acetyl-D-glucosamine residues in a peptidoglycan and between N-acetyl-D-glucosamine residues in chitodextrins.. Essential for lysis of bacterial cell wall, by showing cell wall hydrolyzing activity. This Escherichia coli (strain K12) protein is Probable prophage lysozyme (rrrQ).